The chain runs to 477 residues: Argininosuccinate lyase (477 aa).

This sequence belongs to the lyase 1 family. Argininosuccinate lyase subfamily.

Its subcellular location is the cytoplasm. It carries out the reaction 2-(N(omega)-L-arginino)succinate = fumarate + L-arginine. Its pathway is amino-acid biosynthesis; L-arginine biosynthesis; L-arginine from L-ornithine and carbamoyl phosphate: step 3/3. In Corynebacterium diphtheriae (strain ATCC 700971 / NCTC 13129 / Biotype gravis), this protein is Argininosuccinate lyase.